The chain runs to 407 residues: Zinc finger protein 552 (407 aa).

The region spanning 14-90 is the KRAB domain; it reads VTFEDVAVKF…PMAGVSPKKA (77 aa). Residues 91 to 113 form a C2H2-type 1 zinc finger; sequence HPCEMCGPILGDILHVADHQGTH. A C2H2-type 2; degenerate zinc finger spans residues 119 to 141; sequence HRCEAWGNKLYDSGNFHQHQNEH. Residues K176 and K198 each participate in a glycyl lysine isopeptide (Lys-Gly) (interchain with G-Cter in SUMO2) cross-link. Residues 212-234 form a C2H2-type 3; degenerate zinc finger; it reads YSCGGCMKHFSTKDILSQHERLL. The C2H2-type 4; degenerate zinc-finger motif lies at 244-262; that stretch reads ECGKSSSKYDSFSNHQGVH. Glycyl lysine isopeptide (Lys-Gly) (interchain with G-Cter in SUMO2) cross-links involve residues K251 and K266. 5 C2H2-type zinc fingers span residues 268–290, 296–318, 324–346, 352–374, and 380–402; these read YTCG…QRIH, YECE…QRVH, YECS…KRVH, YECS…RRVH, and YGCS…QRVH. A Glycyl lysine isopeptide (Lys-Gly) (interchain with G-Cter in SUMO2) cross-link involves residue K308.

The protein belongs to the krueppel C2H2-type zinc-finger protein family.

The protein localises to the nucleus. Its function is as follows. May be involved in transcriptional regulation. In Homo sapiens (Human), this protein is Zinc finger protein 552 (ZNF552).